Consider the following 91-residue polypeptide: uncharacterized protein (91 aa).

This is an uncharacterized protein from Vaccinia virus (strain Copenhagen) (VACV).